The primary structure comprises 299 residues: 4-diphosphocytidyl-2-C-methyl-D-erythritol kinase (299 aa).

Residue Lys-22 is part of the active site. 108 to 118 lines the ATP pocket; the sequence is PVGAGLGGGSS. Asp-150 is an active-site residue.

Belongs to the GHMP kinase family. IspE subfamily.

It catalyses the reaction 4-CDP-2-C-methyl-D-erythritol + ATP = 4-CDP-2-C-methyl-D-erythritol 2-phosphate + ADP + H(+). The protein operates within isoprenoid biosynthesis; isopentenyl diphosphate biosynthesis via DXP pathway; isopentenyl diphosphate from 1-deoxy-D-xylulose 5-phosphate: step 3/6. Catalyzes the phosphorylation of the position 2 hydroxy group of 4-diphosphocytidyl-2C-methyl-D-erythritol. This is 4-diphosphocytidyl-2-C-methyl-D-erythritol kinase from Desulfotalea psychrophila (strain LSv54 / DSM 12343).